A 1050-amino-acid chain; its full sequence is DNA polymerase I A, chloroplastic/mitochondrial (1050 aa).

The N-terminal 91 residues, 1–91 (MAMGVSLTSH…VVFNGEWELR (91 aa)), are a transit peptide targeting the chloroplast and mitochondrion. The interval 202–240 (PRKGLDVGDNMDVNPKGEGIQRPLISDKSSGTANGNKNT) is disordered. Residues 228-240 (DKSSGTANGNKNT) are compositionally biased toward polar residues. A 3'-5' exonuclease domain is found at 312 to 490 (ELICFSIYCG…LYESMTKKLQ (179 aa)). A disordered region spans residues 673 to 694 (VVEDDDVETSETQKSKTDDETD). The tract at residues 717–1048 (AIASLCEVCS…DAKCAQNWYA (332 aa)) is polymerase.

It belongs to the DNA polymerase type-A family. As to expression, expressed in shoot apical meristem.

The protein resides in the plastid. It localises to the chloroplast. It is found in the mitochondrion. The enzyme catalyses DNA(n) + a 2'-deoxyribonucleoside 5'-triphosphate = DNA(n+1) + diphosphate. Not inhibited by aphidicolin. Functionally, in addition to polymerase activity, this DNA polymerase exhibits 5'-3' exonuclease activity. Required for DNA replication and accumulation in plastids and mitochondria. May be required for DNA repair in both organelles. The sequence is that of DNA polymerase I A, chloroplastic/mitochondrial (POLIA) from Arabidopsis thaliana (Mouse-ear cress).